The following is a 179-amino-acid chain: Macro domain-containing protein XCC3184 (179 aa).

The Macro domain maps to 1 to 175; it reads MRIEVWQGDI…AYHQALATQE (175 aa).

This sequence belongs to the MacroD-type family.

This Xanthomonas campestris pv. campestris (strain ATCC 33913 / DSM 3586 / NCPPB 528 / LMG 568 / P 25) protein is Macro domain-containing protein XCC3184.